Here is a 640-residue protein sequence, read N- to C-terminus: Glutamyl-tRNA(Gln) amidotransferase subunit E (640 aa).

Belongs to the GatB/GatE family. GatE subfamily. As to quaternary structure, heterodimer of GatD and GatE.

It carries out the reaction L-glutamyl-tRNA(Gln) + L-glutamine + ATP + H2O = L-glutaminyl-tRNA(Gln) + L-glutamate + ADP + phosphate + H(+). In terms of biological role, allows the formation of correctly charged Gln-tRNA(Gln) through the transamidation of misacylated Glu-tRNA(Gln) in organisms which lack glutaminyl-tRNA synthetase. The reaction takes place in the presence of glutamine and ATP through an activated gamma-phospho-Glu-tRNA(Gln). The GatDE system is specific for glutamate and does not act on aspartate. The chain is Glutamyl-tRNA(Gln) amidotransferase subunit E from Methanopyrus kandleri (strain AV19 / DSM 6324 / JCM 9639 / NBRC 100938).